A 404-amino-acid polypeptide reads, in one-letter code: MTNELGDIGFGYRPRAAYATDPALSRGRLFDEVESPTRTPFQRDRDRIIHSTAFRRLKHKTQVFIAHEGDHYRTRLTHSIEVAQIARAVARALRGDEDLAEAVALVHDFGHTPFGHTGEDALNDKMAAWGGFDHNAQSLRIVTRLEARYAEFDGLNLTWETLEGLVKHNGPLTDASGKGLKGPVPQAIRDYSQMQDLELDRFAGIEAQCAAIADDIAYNTHDIDDGLRAGLLTLDMLKTVSLPGKILEGVRQRYPRLDDVRTGHELMRRQITAMVEDVIVSATANLERVGPRSADAVRAAGETMVTFSAEMAAAEKELKAFLYKHLYRHEEVMRVRAGAEQIVRDLFDVYFADPRAMPDGWREGLDRAEDRIKARSVADFLAGMTDTYALKEHRRLFDRTPDLS.

The 145-residue stretch at 75 to 219 (RLTHSIEVAQ…AAIADDIAYN (145 aa)) folds into the HD domain.

Belongs to the dGTPase family. Type 2 subfamily.

This is Deoxyguanosinetriphosphate triphosphohydrolase-like protein 1 from Mesorhizobium japonicum (strain LMG 29417 / CECT 9101 / MAFF 303099) (Mesorhizobium loti (strain MAFF 303099)).